Here is a 159-residue protein sequence, read N- to C-terminus: Phosphopantetheine adenylyltransferase (159 aa).

Substrate is bound at residue threonine 10. Residues 10-11 (TF) and histidine 18 each bind ATP. 3 residues coordinate substrate: lysine 42, methionine 74, and arginine 88. Residues 89–91 (GLR), glutamate 99, and 124–130 (WSFISSS) contribute to the ATP site.

The protein belongs to the bacterial CoaD family. As to quaternary structure, homohexamer. It depends on Mg(2+) as a cofactor.

It is found in the cytoplasm. It catalyses the reaction (R)-4'-phosphopantetheine + ATP + H(+) = 3'-dephospho-CoA + diphosphate. It participates in cofactor biosynthesis; coenzyme A biosynthesis; CoA from (R)-pantothenate: step 4/5. Reversibly transfers an adenylyl group from ATP to 4'-phosphopantetheine, yielding dephospho-CoA (dPCoA) and pyrophosphate. This is Phosphopantetheine adenylyltransferase from Shigella dysenteriae serotype 1 (strain Sd197).